Here is a 140-residue protein sequence, read N- to C-terminus: ATP synthase epsilon chain (140 aa).

Belongs to the ATPase epsilon chain family. In terms of assembly, F-type ATPases have 2 components, CF(1) - the catalytic core - and CF(0) - the membrane proton channel. CF(1) has five subunits: alpha(3), beta(3), gamma(1), delta(1), epsilon(1). CF(0) has three main subunits: a, b and c.

The protein resides in the cell inner membrane. Produces ATP from ADP in the presence of a proton gradient across the membrane. This Laribacter hongkongensis (strain HLHK9) protein is ATP synthase epsilon chain.